The sequence spans 167 residues: Protein YfbM (167 aa).

As to quaternary structure, monomer.

The polypeptide is Protein YfbM (yfbM) (Escherichia coli (strain K12)).